The chain runs to 189 residues: Calcyphosin (189 aa).

EF-hand domains follow at residues 21-56, 57-92, 93-128, and 136-172; these read LGIQGLARFFRRLDRDRSRSLDSRELQRGLAELGLV, LDTAEAEGVCRRWDRDGSGTLDLEEFLRALRPPMSQ, AREAVIAAAFAKLDRSGDGVVTVDDLRGVYSGRTHP, and TEEEVLRRFLDNFDSSEKDGQVTLAEFQDYYSGVSAS. Ca(2+) contacts are provided by Asp-34, Asp-36, Ser-38, Ser-40, Glu-45, Asp-70, Asp-72, Ser-74, Thr-76, Glu-81, Asp-106, Ser-108, Asp-110, and Asp-117. Ser-40 carries the post-translational modification Phosphoserine; by PKA.

Monomer. Does not form oligomers in the presence of calcium. Phosphorylated in response to thyrotropin and cAMP. As to expression, detected in thyroid, salivary gland, lung, brain and cerebellum (at protein level).

Its subcellular location is the cytoplasm. In terms of biological role, calcium-binding protein. May play a role in cellular signaling events (Potential). This chain is Calcyphosin (CAPS), found in Canis lupus familiaris (Dog).